A 97-amino-acid polypeptide reads, in one-letter code: YcgL domain-containing protein PA14_47450 (97 aa).

In terms of domain architecture, YcgL spans 3–87 (RICSVYKSPR…GEEEYIEHLP (85 aa)).

The protein is YcgL domain-containing protein PA14_47450 of Pseudomonas aeruginosa (strain UCBPP-PA14).